We begin with the raw amino-acid sequence, 289 residues long: MRILEKAPAKINLSLDVHGKRPDGYHEVEMVMTTIDLADRLELTELDKDEIRVSSHNRFVPDDQRNLAYQAAKLLKTRFGIQKGVSIVITKTIPVAAGLAGGSSDAAAALRGLNRLWKLNLTLDELAELGAEIGSDVSFCVHGGTALATGRGEKLKHIATPPHCWVILAKPVIGVSTAEVYRQYDASKVEHPNVERMIEAIEAKDYKEMCGSLGNVLESVTLKMYPEVDMIKRQMKRFGADAVLMSGSGPTVFGLIQYESKVQRIYNGLRGFCDQVYAVRMIGEQNALD.

The active site involves Lys-10. ATP is bound at residue 94–104; sequence PVAAGLAGGSS. Asp-136 is a catalytic residue.

This sequence belongs to the GHMP kinase family. IspE subfamily.

It catalyses the reaction 4-CDP-2-C-methyl-D-erythritol + ATP = 4-CDP-2-C-methyl-D-erythritol 2-phosphate + ADP + H(+). The protein operates within isoprenoid biosynthesis; isopentenyl diphosphate biosynthesis via DXP pathway; isopentenyl diphosphate from 1-deoxy-D-xylulose 5-phosphate: step 3/6. Its function is as follows. Catalyzes the phosphorylation of the position 2 hydroxy group of 4-diphosphocytidyl-2C-methyl-D-erythritol. The sequence is that of 4-diphosphocytidyl-2-C-methyl-D-erythritol kinase from Bacillus pumilus (strain SAFR-032).